Reading from the N-terminus, the 117-residue chain is UPF0344 protein GWCH70_0687 (117 aa).

Helical transmembrane passes span 2–22 (THAH…AVSL), 32–52 (IVQM…GLLL), 55–75 (IASI…LIGA), and 97–117 (IVAF…FDLF).

The protein belongs to the UPF0344 family.

The protein localises to the cell membrane. The sequence is that of UPF0344 protein GWCH70_0687 from Geobacillus sp. (strain WCH70).